Here is a 449-residue protein sequence, read N- to C-terminus: Omega-amino acid--pyruvate aminotransferase (449 aa).

Trp-60 provides a ligand contact to substrate. Residue 119–120 (GS) participates in pyridoxal 5'-phosphate binding. Lys-288 carries the N6-(pyridoxal phosphate)lysine modification. Position 327 (Thr-327) interacts with pyridoxal 5'-phosphate. The substrate site is built by Arg-414 and Gln-421.

Belongs to the class-III pyridoxal-phosphate-dependent aminotransferase family. In terms of assembly, homotetramer. The cofactor is pyridoxal 5'-phosphate.

The enzyme catalyses 3-oxopropanoate + L-alanine = beta-alanine + pyruvate. Functionally, catalyzes transamination between a variety of omega-amino acids, mono and diamines, and pyruvate. Plays a pivotal role in the metabolism of the omega amino acids. In Pseudomonas putida (Arthrobacter siderocapsulatus), this protein is Omega-amino acid--pyruvate aminotransferase.